The following is a 99-amino-acid chain: Aspartyl/glutamyl-tRNA(Asn/Gln) amidotransferase subunit C (99 aa).

Belongs to the GatC family. As to quaternary structure, heterotrimer of A, B and C subunits.

It catalyses the reaction L-glutamyl-tRNA(Gln) + L-glutamine + ATP + H2O = L-glutaminyl-tRNA(Gln) + L-glutamate + ADP + phosphate + H(+). The catalysed reaction is L-aspartyl-tRNA(Asn) + L-glutamine + ATP + H2O = L-asparaginyl-tRNA(Asn) + L-glutamate + ADP + phosphate + 2 H(+). In terms of biological role, allows the formation of correctly charged Asn-tRNA(Asn) or Gln-tRNA(Gln) through the transamidation of misacylated Asp-tRNA(Asn) or Glu-tRNA(Gln) in organisms which lack either or both of asparaginyl-tRNA or glutaminyl-tRNA synthetases. The reaction takes place in the presence of glutamine and ATP through an activated phospho-Asp-tRNA(Asn) or phospho-Glu-tRNA(Gln). This chain is Aspartyl/glutamyl-tRNA(Asn/Gln) amidotransferase subunit C, found in Orientia tsutsugamushi (strain Ikeda) (Rickettsia tsutsugamushi).